Here is a 556-residue protein sequence, read N- to C-terminus: Large cysteine-rich periplasmic protein OmcB (556 aa).

An N-terminal signal peptide occupies residues 1-22 (MSKLIRRVVTVLALTSMASCFA). A propeptide spanning residues 23 to 40 (SGGIEAAVAESLITKIVA) is cleaved from the precursor.

In terms of assembly, part of a disulfide cross-linked outer membrane complex (COMC) composed of the major outer membrane porin (MOMP), the small cysteine-rich protein (OmcA) and the large cysteine-rich periplasmic protein (OmcB).

The protein localises to the periplasm. In terms of biological role, in elementary bodies (EBs, the infectious stage, which is able to survive outside the host cell) provides the structural integrity of the outer envelope through disulfide cross-links with the small cysteine-rich protein and the major outer membrane porin. It has been described in publications as the Sarkosyl-insoluble COMC (Chlamydia outer membrane complex), and serves as the functional equivalent of peptidoglycan. The chain is Large cysteine-rich periplasmic protein OmcB (omcB) from Chlamydia pneumoniae (Chlamydophila pneumoniae).